Here is a 420-residue protein sequence, read N- to C-terminus: FLYWCH transcription factor 3 (420 aa).

Residues 87-104 show a composition bias toward low complexity; the sequence is SSTSPDSQPSSSSSVMSS. Disordered stretches follow at residues 87–107 and 119–138; these read SSTS…STDE and KINK…YTPR. The segment covering 123–134 has biased composition (polar residues); the sequence is AQRQSSPNSSKP. Residues 140–195 form an FLYWCH-type zinc finger; sequence IRERVLFDEHLYVFDKCSYDSKKRFFRCERKNTCPARIHTPFDAERVIHKVQVHNH.

Its function is as follows. Probable transcription factor. May bind to the promoters of target genes, including micro-RNA genes, in order to repress expression, and acting redundantly with flh-2. The polypeptide is FLYWCH transcription factor 3 (Caenorhabditis elegans).